Here is a 530-residue protein sequence, read N- to C-terminus: Cytochrome P450 78A6 (530 aa).

Residues 25 to 45 (LAFSLLAVTIIWLAISLFLWT) traverse the membrane as a helical segment. C474 lines the heme pocket.

It belongs to the cytochrome P450 family. Heme serves as cofactor. Expressed in leaves, sepals, petals, stamens, carpels and developing ovules.

The protein resides in the membrane. Plays a role in seed and fruit development. Functions probably in association with CYP78A9 in the regulation of seed growth. Acts maternally to promote seed growth. The chain is Cytochrome P450 78A6 (CYP78A6) from Arabidopsis thaliana (Mouse-ear cress).